The chain runs to 410 residues: 2-oxoisovalerate dehydrogenase subunit alpha (410 aa).

The protein belongs to the BCKDHA family. In terms of assembly, heterodimer of an alpha and a beta chain. Requires thiamine diphosphate as cofactor.

The catalysed reaction is N(6)-[(R)-lipoyl]-L-lysyl-[protein] + 3-methyl-2-oxobutanoate + H(+) = N(6)-[(R)-S(8)-2-methylpropanoyldihydrolipoyl]-L-lysyl-[protein] + CO2. In terms of biological role, the branched-chain alpha-keto dehydrogenase complex catalyzes the overall conversion of alpha-keto acids to acyl-CoA and CO(2). It contains multiple copies of three enzymatic components: branched-chain alpha-keto acid decarboxylase (E1), lipoamide acyltransferase (E2) and lipoamide dehydrogenase (E3). The chain is 2-oxoisovalerate dehydrogenase subunit alpha (bkdA1) from Pseudomonas putida (Arthrobacter siderocapsulatus).